A 166-amino-acid chain; its full sequence is Sec-independent protein translocase protein TatB (166 aa).

Residues 2–22 (FDGIGFMELLLIGVLGLVVLG) form a helical membrane-spanning segment. Residues 69-166 (SKGLSNLSPE…DTRSNPKANG (98 aa)) form a disordered region. 2 stretches are compositionally biased toward polar residues: residues 88-97 (QAAQSVNRPY) and 112-132 (QIHS…SQAN). Over residues 133–153 (PTATVEASPTSASPATPSEPS) the composition is skewed to low complexity. A compositionally biased stretch (polar residues) spans 155 to 166 (GADTRSNPKANG).

The protein belongs to the TatB family. In terms of assembly, the Tat system comprises two distinct complexes: a TatABC complex, containing multiple copies of TatA, TatB and TatC subunits, and a separate TatA complex, containing only TatA subunits. Substrates initially bind to the TatABC complex, which probably triggers association of the separate TatA complex to form the active translocon.

It is found in the cell inner membrane. Part of the twin-arginine translocation (Tat) system that transports large folded proteins containing a characteristic twin-arginine motif in their signal peptide across membranes. Together with TatC, TatB is part of a receptor directly interacting with Tat signal peptides. TatB may form an oligomeric binding site that transiently accommodates folded Tat precursor proteins before their translocation. The chain is Sec-independent protein translocase protein TatB from Shewanella baltica (strain OS223).